Reading from the N-terminus, the 424-residue chain is UDP-N-acetylglucosamine 1-carboxyvinyltransferase (424 aa).

Phosphoenolpyruvate is bound at residue Lys22–Asn23. Residue Arg93 participates in UDP-N-acetyl-alpha-D-glucosamine binding. Catalysis depends on Cys117, which acts as the Proton donor. A 2-(S-cysteinyl)pyruvic acid O-phosphothioketal modification is found at Cys117. Residues Arg122 to Leu126, Lys162 to Val165, Asp307, and Ile329 each bind UDP-N-acetyl-alpha-D-glucosamine.

It belongs to the EPSP synthase family. MurA subfamily.

It is found in the cytoplasm. It catalyses the reaction phosphoenolpyruvate + UDP-N-acetyl-alpha-D-glucosamine = UDP-N-acetyl-3-O-(1-carboxyvinyl)-alpha-D-glucosamine + phosphate. It participates in cell wall biogenesis; peptidoglycan biosynthesis. In terms of biological role, cell wall formation. Adds enolpyruvyl to UDP-N-acetylglucosamine. The protein is UDP-N-acetylglucosamine 1-carboxyvinyltransferase of Haemophilus influenzae (strain PittGG).